Reading from the N-terminus, the 291-residue chain is Mitochondrial thiamine pyrophosphate carrier 1 (291 aa).

6 helical membrane-spanning segments follow: residues 12 to 31 (GATA…GAVA), 83 to 99 (IMYI…YSMF), 120 to 141 (SLIV…FDLL), 167 to 191 (GGLA…GLMF), 214 to 230 (FCGF…TFPL), and 265 to 282 (GFGI…VSLF). 3 Solcar repeats span residues 15-102 (ASVY…FSKA), 115-200 (RPSN…AREV), and 207-290 (NIPF…VLNG).

Belongs to the mitochondrial carrier (TC 2.A.29) family.

The protein resides in the mitochondrion inner membrane. Its function is as follows. Mitochondrial transporter that mediates uptake of thiamine pyrophosphate (ThPP) into mitochondria. The polypeptide is Mitochondrial thiamine pyrophosphate carrier 1 (TPC1) (Meyerozyma guilliermondii (strain ATCC 6260 / CBS 566 / DSM 6381 / JCM 1539 / NBRC 10279 / NRRL Y-324) (Yeast)).